The sequence spans 135 residues: Translation initiation factor 2 subunit beta (135 aa).

It belongs to the eIF-2-beta/eIF-5 family. Heterotrimer composed of an alpha, a beta and a gamma chain.

Functionally, eIF-2 functions in the early steps of protein synthesis by forming a ternary complex with GTP and initiator tRNA. The chain is Translation initiation factor 2 subunit beta from Methanobrevibacter smithii (strain ATCC 35061 / DSM 861 / OCM 144 / PS).